Consider the following 200-residue polypeptide: Dephospho-CoA kinase (200 aa).

The DPCK domain maps to 4–200 (VIGLTGGIAS…AILKKWNIID (197 aa)). An ATP-binding site is contributed by 12–17 (ASGKST).

This sequence belongs to the CoaE family.

It localises to the cytoplasm. The catalysed reaction is 3'-dephospho-CoA + ATP = ADP + CoA + H(+). Its pathway is cofactor biosynthesis; coenzyme A biosynthesis; CoA from (R)-pantothenate: step 5/5. In terms of biological role, catalyzes the phosphorylation of the 3'-hydroxyl group of dephosphocoenzyme A to form coenzyme A. The polypeptide is Dephospho-CoA kinase (Bacillus cereus (strain ZK / E33L)).